The primary structure comprises 409 residues: Glucose-1-phosphate adenylyltransferase (409 aa).

Residues G168, E183–K184, and S201 contribute to the alpha-D-glucose 1-phosphate site.

It belongs to the bacterial/plant glucose-1-phosphate adenylyltransferase family. As to quaternary structure, homotetramer.

The enzyme catalyses alpha-D-glucose 1-phosphate + ATP + H(+) = ADP-alpha-D-glucose + diphosphate. It functions in the pathway glycan biosynthesis; glycogen biosynthesis. In terms of biological role, involved in the biosynthesis of ADP-glucose, a building block required for the elongation reactions to produce glycogen. Catalyzes the reaction between ATP and alpha-D-glucose 1-phosphate (G1P) to produce pyrophosphate and ADP-Glc. In Corynebacterium efficiens (strain DSM 44549 / YS-314 / AJ 12310 / JCM 11189 / NBRC 100395), this protein is Glucose-1-phosphate adenylyltransferase.